Here is a 166-residue protein sequence, read N- to C-terminus: Endoribonuclease YbeY (166 aa).

The Zn(2+) site is built by H132, H136, and H142.

The protein belongs to the endoribonuclease YbeY family. Zn(2+) is required as a cofactor.

The protein localises to the cytoplasm. Functionally, single strand-specific metallo-endoribonuclease involved in late-stage 70S ribosome quality control and in maturation of the 3' terminus of the 16S rRNA. The polypeptide is Endoribonuclease YbeY (Clostridium botulinum (strain 657 / Type Ba4)).